The following is a 128-amino-acid chain: MNISKFNEFENVLFHICLDVDFVLENEFGNSYDIHPNRPFRGKAANGLLDGLFSVTTTFTSGYGSRFGRGYLIIIEILTLNFVDDEFWDKINKRGIEIFREGLKNKFPSKNLDIVLDGNVYKIIGPFF.

This is an uncharacterized protein from Borreliella burgdorferi (strain ATCC 35210 / DSM 4680 / CIP 102532 / B31) (Borrelia burgdorferi).